The following is a 365-amino-acid chain: N5-carboxyaminoimidazole ribonucleotide synthase (365 aa).

ATP contacts are provided by residues Arg-93, Lys-132, 137–143 (GYDGKGQ), 168–171 (EEFV), Glu-176, His-199, and 249–250 (NE). The 183-residue stretch at 97-279 (KLFLKKHGFP…QFENLLRAIT (183 aa)) folds into the ATP-grasp domain.

The protein belongs to the PurK/PurT family. As to quaternary structure, homodimer.

The enzyme catalyses 5-amino-1-(5-phospho-beta-D-ribosyl)imidazole + hydrogencarbonate + ATP = 5-carboxyamino-1-(5-phospho-D-ribosyl)imidazole + ADP + phosphate + 2 H(+). The protein operates within purine metabolism; IMP biosynthesis via de novo pathway; 5-amino-1-(5-phospho-D-ribosyl)imidazole-4-carboxylate from 5-amino-1-(5-phospho-D-ribosyl)imidazole (N5-CAIR route): step 1/2. Its function is as follows. Catalyzes the ATP-dependent conversion of 5-aminoimidazole ribonucleotide (AIR) and HCO(3)(-) to N5-carboxyaminoimidazole ribonucleotide (N5-CAIR). In Aquifex aeolicus (strain VF5), this protein is N5-carboxyaminoimidazole ribonucleotide synthase.